Here is a 415-residue protein sequence, read N- to C-terminus: Serine hydroxymethyltransferase (415 aa).

(6S)-5,6,7,8-tetrahydrofolate-binding positions include Leu-120 and Gly-124–Leu-126. The residue at position 229 (Lys-229) is an N6-(pyridoxal phosphate)lysine.

This sequence belongs to the SHMT family. As to quaternary structure, homodimer. It depends on pyridoxal 5'-phosphate as a cofactor.

It localises to the cytoplasm. It carries out the reaction (6R)-5,10-methylene-5,6,7,8-tetrahydrofolate + glycine + H2O = (6S)-5,6,7,8-tetrahydrofolate + L-serine. The protein operates within one-carbon metabolism; tetrahydrofolate interconversion. It functions in the pathway amino-acid biosynthesis; glycine biosynthesis; glycine from L-serine: step 1/1. Its function is as follows. Catalyzes the reversible interconversion of serine and glycine with tetrahydrofolate (THF) serving as the one-carbon carrier. This reaction serves as the major source of one-carbon groups required for the biosynthesis of purines, thymidylate, methionine, and other important biomolecules. Also exhibits THF-independent aldolase activity toward beta-hydroxyamino acids, producing glycine and aldehydes, via a retro-aldol mechanism. The sequence is that of Serine hydroxymethyltransferase from Caldicellulosiruptor bescii (strain ATCC BAA-1888 / DSM 6725 / KCTC 15123 / Z-1320) (Anaerocellum thermophilum).